We begin with the raw amino-acid sequence, 237 residues long: N-alpha-acetyltransferase 40 (237 aa).

Residue Gly2 is the site of N-myristoyl glycine attachment. Positions 63-216 (SGLEPATVDW…EDCSYEILSR (154 aa)) constitute an N-acetyltransferase domain. Substrate-binding positions include Tyr85, 127–129 (DVE), and Tyr138. Acetyl-CoA contacts are provided by residues 140–142 (VQL) and 148–153 (RKGLGK). Thr174 serves as a coordination point for substrate. Asn179 provides a ligand contact to acetyl-CoA. Positions 197 and 211 each coordinate substrate.

It belongs to the acetyltransferase family. NAA40 subfamily.

The protein localises to the cytoplasm. The protein resides in the nucleus. The enzyme catalyses N-terminal L-seryl-[histone H4] + acetyl-CoA = N-terminal N(alpha)-acetyl-L-seryl-[histone H4] + CoA + H(+). It carries out the reaction N-terminal L-seryl-[histone H2A] + acetyl-CoA = N-terminal N(alpha)-acetyl-L-seryl-[histone H2A] + CoA + H(+). Functionally, N-alpha-acetyltransferase that specifically mediates the acetylation of the N-terminal residues of histones H4 and H2A. In contrast to other N-alpha-acetyltransferase, has a very specific selectivity for histones H4 and H2A N-terminus and specifically recognizes the 'Ser-Gly-Arg-Gly sequence'. Acts as a negative regulator of apoptosis. May play a role in hepatic lipid metabolism. This Mus musculus (Mouse) protein is N-alpha-acetyltransferase 40.